We begin with the raw amino-acid sequence, 484 residues long: Synaptic vesicle membrane protein VAT-1 homolog (484 aa).

2 stretches are compositionally biased toward low complexity: residues 1-13 (MSGE…QQNA) and 40-61 (SAST…PAAE). Disordered regions lie at residues 1 to 65 (MSGE…KAPE) and 402 to 484 (IGKI…KEEN). Residues 411–484 (PMKEEEKKEE…KKEEVKKEEN (74 aa)) are compositionally biased toward basic and acidic residues.

This sequence belongs to the zinc-containing alcohol dehydrogenase family. Quinone oxidoreductase subfamily.

The polypeptide is Synaptic vesicle membrane protein VAT-1 homolog (Danio rerio (Zebrafish)).